Here is a 782-residue protein sequence, read N- to C-terminus: MLSLYEKIKIRLIILFLLAALSFIGLFFIINYQLVSERAVKRADSRFELIQKNVGYFFKDIERSALTLKDSLYLLKNTEEIQRAVILKMEMMPFLDSVGLVLDDNKYYLFSRRANDKIVVYHQEQVNGPLVDESGRVIFADFNPSKRPWSVASDDSNNSWNPAYNCFDRPGKKCISFTLHINGKDHDLLAVDKIHVDLNWRYLNEYLDQISANDEVLFLKQGHEIIAKNQLAREKLIIYNSEGNYNIIDSVDTEYIEKTSAVPNNALFEIYFYYPGGNLLNASDKLFYLPFAFIIIVLLVVYLMTTRVFRRQFSEMTELVNTLAFLPDSTDQIEALKIREGDAKEIISIKNSIAEMKDAEIERSNKLLSLISYDQESGFIKNMAIIESNNNQYLAVGIIKLCGLEAVEAVFGVDERNKIVRKLCQRIAEKYAQCCDIVTFNADLYLLLCRENVQTFTRKIAMVNDFDSSFGYRNLRIHKSAICEPLQGENAWSYAEKLKLAISSIRDHMFSEFIFCDDAKLNEIEENIWIARNIRHAMEIGELFLVYQPIVDINTRAILGAEALCRWVSAERGIISPLKFITIAEDIGFINELGYQIIKTAMGEFRHFSQRASLKDDFLLHINVSPWQLNEPHFHERFTTIMKENGLKANSLCVEITETVIERINEHFYLNIEQLRKQGVRISIDDFGTGLSNLKRFYEINPDSIKVDSQFTGDIFGTAGKIVRIIFDLARYNRIPVIAEGVESEDVARELIKLGCVQAQGYLYQKPMPFSAWDKSGKLVKE.

2 helical membrane-spanning segments follow: residues 12–32 (LIILFLLAALSFIGLFFIINY) and 286–306 (LFYLPFAFIIIVLLVVYLMTT). In terms of domain architecture, EAL spans 527–781 (NIWIARNIRH…AWDKSGKLVK (255 aa)).

Its subcellular location is the cell membrane. The catalysed reaction is 3',3'-c-di-GMP + H2O = 5'-phosphoguanylyl(3'-&gt;5')guanosine + H(+). Functionally, phosphodiesterase (PDE) that catalyzes the hydrolysis of cyclic-di-GMP (c-di-GMP) to 5'-pGpG. Overexpression reduces biofilm formation. Cyclic-di-GMP is a second messenger which controls cell surface-associated traits in bacteria. In Escherichia coli (strain K12), this protein is Probable cyclic di-GMP phosphodiesterase PdeI.